The primary structure comprises 393 residues: NAD(P)H-quinone oxidoreductase subunit H, chloroplastic (393 aa).

The protein belongs to the complex I 49 kDa subunit family. NDH is composed of at least 16 different subunits, 5 of which are encoded in the nucleus.

It is found in the plastid. Its subcellular location is the chloroplast thylakoid membrane. The enzyme catalyses a plastoquinone + NADH + (n+1) H(+)(in) = a plastoquinol + NAD(+) + n H(+)(out). It catalyses the reaction a plastoquinone + NADPH + (n+1) H(+)(in) = a plastoquinol + NADP(+) + n H(+)(out). Functionally, NDH shuttles electrons from NAD(P)H:plastoquinone, via FMN and iron-sulfur (Fe-S) centers, to quinones in the photosynthetic chain and possibly in a chloroplast respiratory chain. The immediate electron acceptor for the enzyme in this species is believed to be plastoquinone. Couples the redox reaction to proton translocation, and thus conserves the redox energy in a proton gradient. The chain is NAD(P)H-quinone oxidoreductase subunit H, chloroplastic from Platanus occidentalis (Sycamore).